A 215-amino-acid polypeptide reads, in one-letter code: MVLLTMIARLADGLPLAASMQEDEQMGRDLQQYQSQAKQLFRKLNEQSPNRCTLEAGSMSFHYVIEKGVCYLVLCEAGFPKKLAFAYLEDLQAEFHEQHGKKVPTVSRPYSFIEFDTYIQKTKKSYIDSRARRNLSNINTELQDVQRIMVANIEEVLQRGEALSALDSKASNLSSLSKKYRSDAKYLNTRSTYAKLAAGGVFFIMLIVYIRFWWL.

At 1–190 (MVLLTMIARL…RSDAKYLNTR (190 aa)) the chain is on the cytoplasmic side. The Longin domain maps to 6–119 (MIARLADGLP…YSFIEFDTYI (114 aa)). The v-SNARE coiled-coil homology domain occupies 134 to 194 (NLSNINTELQ…KYLNTRSTYA (61 aa)). The chain crosses the membrane as a helical span at residues 191 to 213 (STYAKLAAGGVFFIMLIVYIRFW). Over 214–215 (WL) the chain is Lumenal.

It belongs to the synaptobrevin family. Component of 2 distinct SNARE complexes.

It localises to the endoplasmic reticulum membrane. Its subcellular location is the endoplasmic reticulum-Golgi intermediate compartment membrane. It is found in the golgi apparatus. The protein localises to the cis-Golgi network membrane. The protein resides in the trans-Golgi network membrane. It localises to the melanosome. Its function is as follows. SNARE involved in targeting and fusion of ER-derived transport vesicles with the Golgi complex as well as Golgi-derived retrograde transport vesicles with the ER. This is Vesicle-trafficking protein SEC22b-B from Danio rerio (Zebrafish).